Reading from the N-terminus, the 2250-residue chain is DNA polymerase epsilon catalytic subunit A (2250 aa).

Disordered regions lie at residues 1–63 (MPSR…GTAA), 235–259 (NGHG…DKEP), and 1990–2010 (PGTE…KAAS). Over residues 32–41 (GGGGGGGGVA) the composition is skewed to gly residues. The segment covering 249–259 (DDTKKKKDKEP) has biased composition (basic and acidic residues). Polar residues predominate over residues 1990 to 2000 (PGTEATSTMNP). Zn(2+) contacts are provided by Cys2118, Cys2121, Cys2156, and Cys2159. Residues 2118–2159 (CKKCNAIRDVDLCRDPDRLPSVNPDSGEMLEPARKNWVCHKC) form a CysA-type zinc finger. [4Fe-4S] cluster contacts are provided by Cys2190, Cys2193, Cys2205, and Cys2207. The CysB motif signature appears at 2190 to 2207 (CLKCSQTKSDNLAATCKC).

This sequence belongs to the DNA polymerase type-B family. In terms of assembly, heterotetramer. Consists of 4 subunits: POL2, DPB2, DPB3 and DPB4. The cofactor is [4Fe-4S] cluster.

Its subcellular location is the nucleus. It catalyses the reaction DNA(n) + a 2'-deoxyribonucleoside 5'-triphosphate = DNA(n+1) + diphosphate. In terms of biological role, DNA polymerase II participates in chromosomal DNA replication. The chain is DNA polymerase epsilon catalytic subunit A (POL2) from Cryptococcus neoformans var. neoformans serotype D (strain JEC21 / ATCC MYA-565) (Filobasidiella neoformans).